A 399-amino-acid polypeptide reads, in one-letter code: Putative 8-amino-7-oxononanoate synthase (399 aa).

Arginine 23 lines the substrate pocket. Residue 110–111 coordinates pyridoxal 5'-phosphate; it reads GY. Histidine 135 is a substrate binding site. Residues serine 183, 208–211, and 239–242 each bind pyridoxal 5'-phosphate; these read DEAH and TLSK. Lysine 242 carries the post-translational modification N6-(pyridoxal phosphate)lysine. Residue threonine 364 coordinates substrate.

This sequence belongs to the class-II pyridoxal-phosphate-dependent aminotransferase family. BioF subfamily. As to quaternary structure, homodimer. The cofactor is pyridoxal 5'-phosphate.

It catalyses the reaction 6-carboxyhexanoyl-[ACP] + L-alanine + H(+) = (8S)-8-amino-7-oxononanoate + holo-[ACP] + CO2. The protein operates within cofactor biosynthesis; biotin biosynthesis. Functionally, catalyzes the decarboxylative condensation of pimeloyl-[acyl-carrier protein] and L-alanine to produce 8-amino-7-oxononanoate (AON), [acyl-carrier protein], and carbon dioxide. The sequence is that of Putative 8-amino-7-oxononanoate synthase (bioF) from Cyanothece sp. (strain PCC 7425 / ATCC 29141).